We begin with the raw amino-acid sequence, 190 residues long: MKKVSPSYLKHQFLIAMPHMHDENFAQTLTYVVEHNANGAMGLVINRPQSLTLADVLEQLRPELPAPKRCQEIAIHAGGPVQTDRGFVLHPSGQTFQATVDLPGGISLSTSQDVLFSIADGYGPDQNVITLGYAGWDAGQLDAEMADNAWLTCSFDPAILFDVDSDQRLDAAARRLGINLALISTQAGHA.

It belongs to the UPF0301 (AlgH) family.

This chain is UPF0301 protein PSPTO_5037, found in Pseudomonas syringae pv. tomato (strain ATCC BAA-871 / DC3000).